Consider the following 89-residue polypeptide: Large ribosomal subunit protein bL27 (89 aa).

The segment at 1–21 is disordered; the sequence is MAHKKSGGSSSNGRDSESKRL.

The protein belongs to the bacterial ribosomal protein bL27 family.

The sequence is that of Large ribosomal subunit protein bL27 from Caulobacter vibrioides (strain NA1000 / CB15N) (Caulobacter crescentus).